The following is a 447-amino-acid chain: Argininosuccinate synthase (447 aa).

ATP is bound by residues 17 to 25 (AFSGGLDTS) and A43. Residue Y99 participates in L-citrulline binding. ATP contacts are provided by G129 and T131. L-aspartate is bound by residues T131, N135, and D136. L-citrulline is bound at residue N135. ATP is bound at residue D136. Residues R139 and S192 each coordinate L-citrulline. D194 contributes to the ATP binding site. L-citrulline contacts are provided by T201, E203, and E280.

It belongs to the argininosuccinate synthase family. Type 2 subfamily. In terms of assembly, homotetramer.

It is found in the cytoplasm. It catalyses the reaction L-citrulline + L-aspartate + ATP = 2-(N(omega)-L-arginino)succinate + AMP + diphosphate + H(+). Its pathway is amino-acid biosynthesis; L-arginine biosynthesis; L-arginine from L-ornithine and carbamoyl phosphate: step 2/3. This Shigella flexneri serotype 5b (strain 8401) protein is Argininosuccinate synthase.